A 369-amino-acid chain; its full sequence is MLPLPTWTLSDVDAILVLSFGGPEGQQDVIPFLENVTRGRGIPRERLEEVAVHYRHFGGISPLNALNREIIGNIIEVLSSRGLEIPVYFGNRNWHPFVNDTAEKMVRDGVRNVAVFATSAWGGYSGCRQYDEDIVRMNHHLEEKELPTLNCLKLRQFFDHPLFIEEMSSVVFQAARELGISALDELQLHQKVVFTAHSIPEVANENSGRKEDGPLYSRQVYEAASLVAKHLGISQERYDVVWQSASGNGQIPWLEPDILDYAKCQHDEGVSELVVAPIGFISDHMEVVWDLDHELQDLASDLGMSISRAATVGHTDSFATMIVELVEESLGVKPHQNLGTVPSKGCSFNGEPCEVNCCKPVQRPHSAKA.

Serine 61 and tyrosine 130 together coordinate Fe-coproporphyrin III. Residues histidine 197 and glutamate 286 each coordinate Fe(2+).

Belongs to the ferrochelatase family.

The protein resides in the cytoplasm. The catalysed reaction is Fe-coproporphyrin III + 2 H(+) = coproporphyrin III + Fe(2+). The protein operates within porphyrin-containing compound metabolism; protoheme biosynthesis. Functionally, involved in coproporphyrin-dependent heme b biosynthesis. Catalyzes the insertion of ferrous iron into coproporphyrin III to form Fe-coproporphyrin III. This chain is Coproporphyrin III ferrochelatase, found in Corynebacterium diphtheriae (strain ATCC 700971 / NCTC 13129 / Biotype gravis).